Reading from the N-terminus, the 407-residue chain is Ran GTPase-activating protein 1 (407 aa).

11 LRR repeats span residues 11 to 39 (EEEQVYSISGKALKLTTSDDIKPYLEELA), 40 to 67 (ALKTCTKLDLSGNTIGTEASEALAKCIA), 68 to 101 (ENTQVRESLVEVNFADLYTSRLVDEVVDSLKFLL), 102 to 133 (PVLLKCPHLEIVNLSDNAFGLRTIELLEDYIA), 134 to 166 (HAVNIKHLILSNNGMGPFAGERIGKALFHLAQN), 167 to 197 (KKAASKPFLETFICGRNRLENGSAVYLALGL), 198 to 226 (KSHSEGLKVVKLYQNGIRPKGVATLIHYG), 227 to 256 (LQYLKNLEILDLQDNTFTKHASLILAKALP), 257 to 285 (TWKDSLFELNLNDCLLKTAGSDEVFKVFT), 286 to 315 (EVKFPNLHVLKFEYNEMAQETIEVSFLPAM), and 316 to 346 (EKGNLPELEKLEINGNRLDEDSDALDLLQSK). A disordered region spans residues 353–378 (DDFEEVDSEDEEGEDEEDEDEDEKLE). Residue serine 360 is modified to Phosphoserine.

Belongs to the RNA1 family.

It is found in the cytoplasm. Its function is as follows. GTPase activator for the nuclear Ras-related regulatory protein GSP1 (Ran), converting it to the putatively inactive GDP-bound state. In Saccharomyces cerevisiae (strain ATCC 204508 / S288c) (Baker's yeast), this protein is Ran GTPase-activating protein 1 (RNA1).